Reading from the N-terminus, the 353-residue chain is Photosystem II D2 protein (353 aa).

Thr2 bears the N-acetylthreonine mark. Thr2 is modified (phosphothreonine). A helical transmembrane segment spans residues 41-61; it reads CAYFALGGWFTGTTFVTSWYT. Position 118 (His118) interacts with chlorophyll a. The chain crosses the membrane as a helical span at residues 125-141; sequence GFMLRQFELARSVQLRP. Gln130 and Asn143 together coordinate pheophytin a. The helical transmembrane segment at 153-166 threads the bilayer; it reads VFVSVFLIYPLGQS. Position 198 (His198) interacts with chlorophyll a. Residues 208–228 form a helical membrane-spanning segment; it reads AALLCAIHGATVENTLFEDGD. Residues His215 and Phe262 each contribute to the a plastoquinone site. Residue His215 participates in Fe cation binding. Residue His269 coordinates Fe cation. The chain crosses the membrane as a helical span at residues 279-295; it reads GLWMSAIGVVGLALNLR.

Belongs to the reaction center PufL/M/PsbA/D family. As to quaternary structure, PSII is composed of 1 copy each of membrane proteins PsbA, PsbB, PsbC, PsbD, PsbE, PsbF, PsbH, PsbI, PsbJ, PsbK, PsbL, PsbM, PsbT, PsbX, PsbY, PsbZ, Psb30/Ycf12, at least 3 peripheral proteins of the oxygen-evolving complex and a large number of cofactors. It forms dimeric complexes. The D1/D2 heterodimer binds P680, chlorophylls that are the primary electron donor of PSII, and subsequent electron acceptors. It shares a non-heme iron and each subunit binds pheophytin, quinone, additional chlorophylls, carotenoids and lipids. There is also a Cl(-1) ion associated with D1 and D2, which is required for oxygen evolution. The PSII complex binds additional chlorophylls, carotenoids and specific lipids. serves as cofactor.

Its subcellular location is the plastid. The protein localises to the chloroplast thylakoid membrane. It catalyses the reaction 2 a plastoquinone + 4 hnu + 2 H2O = 2 a plastoquinol + O2. Its function is as follows. Photosystem II (PSII) is a light-driven water:plastoquinone oxidoreductase that uses light energy to abstract electrons from H(2)O, generating O(2) and a proton gradient subsequently used for ATP formation. It consists of a core antenna complex that captures photons, and an electron transfer chain that converts photonic excitation into a charge separation. The D1/D2 (PsbA/PsbD) reaction center heterodimer binds P680, the primary electron donor of PSII as well as several subsequent electron acceptors. D2 is needed for assembly of a stable PSII complex. This is Photosystem II D2 protein from Lolium perenne (Perennial ryegrass).